The following is a 469-amino-acid chain: Argininosuccinate lyase (469 aa).

The protein belongs to the lyase 1 family. Argininosuccinate lyase subfamily.

It localises to the cytoplasm. It catalyses the reaction 2-(N(omega)-L-arginino)succinate = fumarate + L-arginine. Its pathway is amino-acid biosynthesis; L-arginine biosynthesis; L-arginine from L-ornithine and carbamoyl phosphate: step 3/3. This Burkholderia thailandensis (strain ATCC 700388 / DSM 13276 / CCUG 48851 / CIP 106301 / E264) protein is Argininosuccinate lyase.